A 1244-amino-acid polypeptide reads, in one-letter code: SWI/SNF chromatin remodeling complex subunit swsn-7 (1244 aa).

Positions 24-116 (QRKMAEFYNS…YLSKFEQVET (93 aa)) constitute an ARID domain. Over residues 486–496 (FTQGSNQQQNP) the composition is skewed to polar residues. Disordered regions lie at residues 486-534 (FTQG…GAAP), 556-583 (NREQYSTQSSQPHPPHTNVPPSPSILAH), and 597-619 (DRRTGNLPVRPIAPSTNSGESQL). The segment covering 497–508 (HHSQGGHQLGHS) has biased composition (low complexity). The span at 556-566 (NREQYSTQSSQ) shows a compositional bias: polar residues. The span at 567–578 (PHPPHTNVPPSP) shows a compositional bias: pro residues. Positions 610–619 (PSTNSGESQL) are enriched in polar residues. The RFX-type winged-helix DNA-binding region spans 623–697 (TEKWIRQNCV…IVAQGIRLIR (75 aa)). Residues 1134-1244 (EEEQQKMLSE…TTPVRAGAGI (111 aa)) form a disordered region. A compositionally biased stretch (low complexity) spans 1142-1158 (SEVPSSASLSSMAGSSS). Polar residues-rich tracts occupy residues 1159 to 1186 (QLPTVPDSPTSSVASAPMKESTSVSNKP) and 1194 to 1212 (LNFSSLNEKTPTSPQFTAG). Residues 1220-1231 (PIQQHIPSQPSP) are compositionally biased toward low complexity.

Component of the SWI/SNF-B (PBAF) chromatin remodeling complex.

The protein localises to the nucleus. Its function is as follows. Involved in transcriptional activation and repression of select genes by chromatin remodeling (alteration of DNA-nucleosome topology). Required for the stability of the SWI/SNF chromatin remodeling complex SWI/SNF-B (PBAF). Required for regulation of a stress response gene network, probably as part of the PBAF complex and perhaps acting in concert with histone demethylase jmjc-1. Binds to the ethanol and stress response elements (ESRE) in the promoter regions of hsp-16.1 and hsp-16.2, probably as part of the PBAF complex. The chain is SWI/SNF chromatin remodeling complex subunit swsn-7 from Caenorhabditis elegans.